The sequence spans 241 residues: Peroxisomal membrane protein 11C (241 aa).

Residues 1 to 124 (MASLSGLASA…ARVLHVDSSR (124 aa)) are Cytoplasmic-facing. A helical membrane pass occupies residues 125 to 149 (WWTLSTTLWALSLLLGVARSLWMLL). Residues 150-211 (KLRQRLRSPT…GVLWAGRFPP (62 aa)) are Lumenal-facing. A helical membrane pass occupies residues 212 to 227 (WLVGLMGTISSILSMY). The Cytoplasmic portion of the chain corresponds to 228–241 (QAARAGGQAEATTP).

Belongs to the peroxin-11 family. As to quaternary structure, homodimer. Heterodimer with either PEX11A or PEX11B. Interacts with FIS1.

It is found in the peroxisome membrane. In terms of biological role, promotes membrane protrusion and elongation on the peroxisomal surface. The sequence is that of Peroxisomal membrane protein 11C (PEX11G) from Homo sapiens (Human).